The sequence spans 217 residues: Nascent polypeptide-associated complex subunit alpha-like protein 2 (217 aa).

The tract at residues 1–81 (MSPPPAVVTE…SEKKSRKAML (81 aa)) is disordered. Acidic residues predominate over residues 37–60 (PIVEDVKDDEDDDDDDEEEEDDDA). Residues 70-135 (SRSEKKSRKA…AKIEDLSSQL (66 aa)) form the NAC-A/B domain. The region spanning 178-215 (VEARDIDLVMTQAGVSRSKAVKALKSHDGDIVSAIMEL) is the UBA domain.

This sequence belongs to the NAC-alpha family.

Functionally, may promote appropriate targeting of ribosome-nascent polypeptide complexes. This is Nascent polypeptide-associated complex subunit alpha-like protein 2 from Arabidopsis thaliana (Mouse-ear cress).